Here is a 237-residue protein sequence, read N- to C-terminus: Platelet-aggregating proteinase PA-BJ (237 aa).

A propeptide spanning residues 1–5 (NSLVI) is cleaved from the precursor. The Peptidase S1 domain maps to 6–229 (VVGGRPCKIN…YLPWIESIIA (224 aa)). 6 cysteine pairs are disulfide-bonded: cysteine 12/cysteine 144, cysteine 31/cysteine 47, cysteine 79/cysteine 236, cysteine 123/cysteine 191, cysteine 155/cysteine 170, and cysteine 181/cysteine 205. Asparagine 25 carries N-linked (GlcNAc...) asparagine glycosylation. A glycan (O-linked (GalNAc...) serine) is linked at serine 28. Active-site charge relay system residues include histidine 46 and aspartate 91. Catalysis depends on serine 185, which acts as the Charge relay system.

The protein belongs to the peptidase S1 family. Snake venom subfamily. In terms of assembly, monomer. As to expression, expressed by the venom gland.

It localises to the secreted. Inhibited by PMSF. The amidolytic activity is also inhibited by benzamidine derivatives. Snake venom serine protease that induces platelet aggregation through activation of protease-activated platelet receptors (PAR1/F2R and PAR4/F2RL3). On F2R, the cleavage occurs at Arg41-Ser42 (like thrombin cleavage), and Arg46-Asn47. In normal condition of hemostasis, the cleavage of the Arg41-Ser42 bond liberates a new N-terminus that functions as an agonist. However after envenomation, the cleavage of Arg46-Asn47 bond degrades this potential agonist. This may explain why the snake protease is less potent than thrombin in causing platelet aggregation and release reaction. On F2RL3, a thrombin-like activity has also been proven by calcium release from lung fibroblasts transfected with this receptor. Possesses amidolytic activities. The chain is Platelet-aggregating proteinase PA-BJ from Bothrops jararaca (Jararaca).